Consider the following 409-residue polypeptide: Dihydroorotase (409 aa).

Zn(2+) is bound by residues His-57 and His-59. Substrate is bound by residues 59 to 61 (HLR) and Asn-91. Zn(2+)-binding residues include Lys-139, His-168, His-208, and Asp-276. Lys-139 carries the post-translational modification N6-carboxylysine. Residue Asp-276 is part of the active site. Substrate-binding positions include His-280 and 290-291 (AG).

The protein belongs to the metallo-dependent hydrolases superfamily. DHOase family. Class I DHOase subfamily. The cofactor is Zn(2+).

The enzyme catalyses (S)-dihydroorotate + H2O = N-carbamoyl-L-aspartate + H(+). It functions in the pathway pyrimidine metabolism; UMP biosynthesis via de novo pathway; (S)-dihydroorotate from bicarbonate: step 3/3. Functionally, catalyzes the reversible cyclization of carbamoyl aspartate to dihydroorotate. The sequence is that of Dihydroorotase from Thermococcus kodakarensis (strain ATCC BAA-918 / JCM 12380 / KOD1) (Pyrococcus kodakaraensis (strain KOD1)).